A 481-amino-acid polypeptide reads, in one-letter code: Proline--tRNA ligase (481 aa).

It belongs to the class-II aminoacyl-tRNA synthetase family. ProS type 3 subfamily. As to quaternary structure, homodimer.

The protein resides in the cytoplasm. The enzyme catalyses tRNA(Pro) + L-proline + ATP = L-prolyl-tRNA(Pro) + AMP + diphosphate. Catalyzes the attachment of proline to tRNA(Pro) in a two-step reaction: proline is first activated by ATP to form Pro-AMP and then transferred to the acceptor end of tRNA(Pro). This chain is Proline--tRNA ligase, found in Saccharolobus islandicus (strain M.16.27) (Sulfolobus islandicus).